A 201-amino-acid polypeptide reads, in one-letter code: Adenylyl-sulfate kinase (201 aa).

35 to 42 (GLSGSGKS) lines the ATP pocket. Ser-109 serves as the catalytic Phosphoserine intermediate.

This sequence belongs to the APS kinase family.

The catalysed reaction is adenosine 5'-phosphosulfate + ATP = 3'-phosphoadenylyl sulfate + ADP + H(+). The protein operates within sulfur metabolism; hydrogen sulfide biosynthesis; sulfite from sulfate: step 2/3. In terms of biological role, catalyzes the synthesis of activated sulfate. This is Adenylyl-sulfate kinase from Prochlorococcus marinus (strain SARG / CCMP1375 / SS120).